We begin with the raw amino-acid sequence, 273 residues long: Ribosomal RNA small subunit methyltransferase A (273 aa).

Residues asparagine 18, leucine 20, glycine 45, glutamate 66, aspartate 91, and asparagine 113 each contribute to the S-adenosyl-L-methionine site.

The protein belongs to the class I-like SAM-binding methyltransferase superfamily. rRNA adenine N(6)-methyltransferase family. RsmA subfamily.

The protein resides in the cytoplasm. The enzyme catalyses adenosine(1518)/adenosine(1519) in 16S rRNA + 4 S-adenosyl-L-methionine = N(6)-dimethyladenosine(1518)/N(6)-dimethyladenosine(1519) in 16S rRNA + 4 S-adenosyl-L-homocysteine + 4 H(+). In terms of biological role, specifically dimethylates two adjacent adenosines (A1518 and A1519) in the loop of a conserved hairpin near the 3'-end of 16S rRNA in the 30S particle. May play a critical role in biogenesis of 30S subunits. The protein is Ribosomal RNA small subunit methyltransferase A of Erwinia tasmaniensis (strain DSM 17950 / CFBP 7177 / CIP 109463 / NCPPB 4357 / Et1/99).